Consider the following 325-residue polypeptide: Small ribosomal subunit protein uS2 (325 aa).

The span at Lys212 to Ala226 shows a compositional bias: basic and acidic residues. The interval Lys212 to Trp325 is disordered. 2 stretches are compositionally biased toward low complexity: residues Gln234 to Asp247 and Pro261 to Gly289. Residues Phe290 to Thr300 show a composition bias toward polar residues.

The protein belongs to the universal ribosomal protein uS2 family. Component of the small ribosomal subunit. Mature ribosomes consist of a small (40S) and a large (60S) subunit. The 40S subunit contains about 33 different proteins and 1 molecule of RNA (18S). The 60S subunit contains about 49 different proteins and 3 molecules of RNA (28S, 5.8S and 5S). Interacts with ribosomal protein S21.

Its subcellular location is the cytoplasm. Functionally, required for the assembly and/or stability of the 40S ribosomal subunit. Required for the processing of the 20S rRNA-precursor to mature 18S rRNA in a late step of the maturation of 40S ribosomal subunits. This Suberites domuncula (Sponge) protein is Small ribosomal subunit protein uS2.